The following is a 174-amino-acid chain: Methylated-DNA--protein-cysteine methyltransferase (174 aa).

Catalysis depends on Cys141, which acts as the Nucleophile; methyl group acceptor.

This sequence belongs to the MGMT family.

It localises to the cytoplasm. It catalyses the reaction a 6-O-methyl-2'-deoxyguanosine in DNA + L-cysteinyl-[protein] = S-methyl-L-cysteinyl-[protein] + a 2'-deoxyguanosine in DNA. It carries out the reaction a 4-O-methyl-thymidine in DNA + L-cysteinyl-[protein] = a thymidine in DNA + S-methyl-L-cysteinyl-[protein]. Involved in the cellular defense against the biological effects of O6-methylguanine (O6-MeG) and O4-methylthymine (O4-MeT) in DNA. Repairs the methylated nucleobase in DNA by stoichiometrically transferring the methyl group to a cysteine residue in the enzyme. This is a suicide reaction: the enzyme is irreversibly inactivated. This is Methylated-DNA--protein-cysteine methyltransferase from Thermococcus gammatolerans (strain DSM 15229 / JCM 11827 / EJ3).